The primary structure comprises 144 residues: MRLNTLSPAEGAKHAPKRVGRGIGSGLGKTGGRGHKGQKSRSGGGVRRGFEGGQMPLYRRLPKFGFTSRKSFVTAEIRLSDLAYVEGDVIDLNALKAANVVGPQIEFAKLILSGEVNRAVTIRGLRVTKGARAAIESAGGKIEE.

The interval Met-1 to Gly-53 is disordered. Positions Arg-21–Gly-31 are enriched in gly residues.

The protein belongs to the universal ribosomal protein uL15 family. Part of the 50S ribosomal subunit.

Binds to the 23S rRNA. This Proteus mirabilis (strain HI4320) protein is Large ribosomal subunit protein uL15.